Consider the following 187-residue polypeptide: Putative zinc finger protein 833 (187 aa).

6 consecutive C2H2-type zinc fingers follow at residues 10-32 (YKCK…ERTH), 38-60 (YECN…ARIH), 66-88 (YICK…ENTH), 94-116 (CECK…ERIH), 122-144 (YKCK…KSTH), and 150-172 (YECK…EGVH).

The chain is Putative zinc finger protein 833 (ZNF833P) from Homo sapiens (Human).